The chain runs to 1337 residues: Zinc finger protein 335 (1337 aa).

Disordered stretches follow at residues 1–108 and 198–226; these read MEEN…LVHS and GPTSTSACLEPPEEPQGDPSSVAQQPPAP. Composition is skewed to low complexity over residues 31 to 45 and 54 to 63; these read TSEAVSADSSDAATV and SGVGQSSDGG. A C2H2-type 1 zinc finger spans residues 248–271; that stretch reads FKCKMCQYRSSTKATLLRHMRERH. Residues 278–444 are disordered; that stretch reads AAAAATGKRG…PPRRRGRPSR (167 aa). Residues 302–332 are compositionally biased toward acidic residues; sequence DRPEEEEEDDDIVDAGAIDDLEEDSDYNPAE. Basic residues predominate over residues 351-362; sequence RPRRRPGRPRKL. A compositionally biased stretch (basic and acidic residues) spans 363 to 372; it reads PRLETSDLHD. Over residues 378 to 388 the composition is skewed to polar residues; sequence LVSSQSTQSPP. 8 C2H2-type zinc fingers span residues 466-488, 496-518, 524-546, 563-585, 591-613, 622-644, 650-673, and 679-702; these read YLCRICGSRFLSHEDLRFHVNSH, FRCLQCSYRSRRWSSLKEHMFNH, YKCDECSYTSVYRKDVIRHAAVH, FPCPVCGRVYPMQKRLTQHMKTH, HMCDKCGKSFKKRYTFKMHLLTH, FKCEFCEFVCEDKKALLNHQLSH, FKCSFCPYRTFREDFLLSHVAVKH, and FACEYCHFSTRHKKNLRLHVRCRH. Disordered stretches follow at residues 733-767 and 963-999; these read LKQQHSTAPGPPLSSPGPEAPQEPAPFQSPETPPL and QCGGPPRDGSEVLSPTKTHHMGGSQGSSTPPPAASHT. The span at 741-756 shows a compositional bias: pro residues; that stretch reads PGPPLSSPGPEAPQEP. Serine 976 and serine 1007 each carry phosphoserine. 4 consecutive C2H2-type zinc fingers follow at residues 1019–1041, 1047–1069, 1075–1097, and 1103–1126; these read FSCKVCSEAFPSRAEMESHKRAH, FKCPDCPFSARQWPEVRAHMAQH, HQCNQCSFASKNKKDLRRHMLTH, and FSCHVCGQRFNRNGHLKFHIQRLH. Lysine 1022 participates in a covalent cross-link: Glycyl lysine isopeptide (Lys-Gly) (interchain with G-Cter in SUMO2). At serine 1149 the chain carries Phosphoserine.

It belongs to the krueppel C2H2-type zinc-finger protein family. As to quaternary structure, interacts with NCOA6; may enhance ligand-dependent transcriptional activation by nuclear hormone receptors. Interacts with CNOT6. Interacts with CNOT9; the interaction is direct. Component of a nuclear receptor-mediated transcription complex composed of at least ZNF335, CCAR2 and EMSY; the complex stimulates the transcription of nuclear receptor target genes such as SOX9 and HOXA1. Within the complex interacts with EMSY and interacts (via C-terminus) with CCAR2. Interacts with members of histone H3'Lys4'(H3K4) methyltransferase complexes ASH2L, CXXC1, KMT2A/MLL1, RBBP5, SETD1A and WDR5. Component of a histone methylation complex composed of at least ZNF335, RBBP5, ASH2L and WDR5; the complex may have histone H3-specific methyltransferase activity, however does not have specificity for 'Lys-4' of histone H3. Interacts with RBBP5 and WDR5. Interacts with ASHL2. Components of this complex may associate with components of the ZNF335-CCAR2-EMSY nuclear receptor-mediated transcription complex to form a complex at least composed of ZNF335, HCFC1, CCAR2, EMSY, MKI67, RBBP5, ASH2L and WDR5. Within this complex also interacts with HCFC1 and MKI67. As to expression, expressed at low levels in cerebral cortex, hippocampus and cerebellum (at protein level).

Its subcellular location is the nucleus. In terms of biological role, component or associated component of some histone methyltransferase complexes may regulate transcription through recruitment of those complexes on gene promoters. Enhances ligand-dependent transcriptional activation by nuclear hormone receptors. Plays an important role in neural progenitor cell proliferation and self-renewal through the regulation of specific genes involved brain development, including REST. Also controls the expression of genes involved in somatic development and regulates, for instance, lymphoblast proliferation. The protein is Zinc finger protein 335 (Znf335) of Mus musculus (Mouse).